The chain runs to 546 residues: Cation/calcium exchanger 5 (546 aa).

13 helical membrane-spanning segments follow: residues 13–33 (ALCLTLISILIFFFLTTTTIP), 88–108 (NLFFSIPILSLLILLHFYILI), 134–154 (AVTLLALGNGAPDVFASVAAL), 163–183 (FGAILSAGTFVSAFVVGFVAI), 194–214 (SFVRDVLFYLIAALFLFYVYL), 218–238 (IFVWQAIGFVGFYIFFVGFVF), 323–343 (SANIVFCPFALLYTCNSFVQL), 356–376 (LPLWLVVLFMTSSLAFLHFTV), 388–408 (VIVVAFIMSVFWISTIAGELL), 423–445 (ALLGLTVLAWGNSVGDLVADVAV), 455–475 (MAGCFAGPMFNMLVGLGSALV), 492–512 (VGIVIAFVFLLLSLMGSLLVI), and 522–542 (FWGICLVGLYVAFTFVSLIIA).

This sequence belongs to the Ca(2+):cation antiporter (CaCA) (TC 2.A.19) family. Cation/calcium exchanger (CCX) subfamily.

The protein localises to the cell membrane. In terms of biological role, membrane-localized H(+)-dependent K(+) and Na(+) transporter. The chain is Cation/calcium exchanger 5 (CCX5) from Arabidopsis thaliana (Mouse-ear cress).